Consider the following 280-residue polypeptide: Ribosomal RNA small subunit methyltransferase A (280 aa).

S-adenosyl-L-methionine is bound by residues Asn28, Leu30, Gly55, Glu77, Asp103, and Asn122.

This sequence belongs to the class I-like SAM-binding methyltransferase superfamily. rRNA adenine N(6)-methyltransferase family. RsmA subfamily.

It is found in the cytoplasm. It carries out the reaction adenosine(1518)/adenosine(1519) in 16S rRNA + 4 S-adenosyl-L-methionine = N(6)-dimethyladenosine(1518)/N(6)-dimethyladenosine(1519) in 16S rRNA + 4 S-adenosyl-L-homocysteine + 4 H(+). In terms of biological role, specifically dimethylates two adjacent adenosines (A1518 and A1519) in the loop of a conserved hairpin near the 3'-end of 16S rRNA in the 30S particle. May play a critical role in biogenesis of 30S subunits. This is Ribosomal RNA small subunit methyltransferase A from Roseobacter denitrificans (strain ATCC 33942 / OCh 114) (Erythrobacter sp. (strain OCh 114)).